Consider the following 953-residue polypeptide: Atromentin synthetase invA5 (953 aa).

The interval 37-460 is adenylation (A) domain; sequence SRAVSQYPDH…SGRIKDTVIV (424 aa). One can recognise a Carrier domain in the interval 592-670; that stretch reads APSTETEKTL…SLAKYVDSLI (79 aa). The tract at residues 597 to 667 is thiolation and peptide carrier (T) domain; the sequence is TEKTLAGIYA…VISSLAKYVD (71 aa). Residue S629 is modified to O-(pantetheine 4'-phosphoryl)serine. The thioesterase (TE) domain stretch occupies residues 693–795; that stretch reads PIFMVHPGVG…FTGLINIPPN (103 aa).

This sequence belongs to the ATP-dependent AMP-binding enzyme family.

The protein operates within secondary metabolite biosynthesis. An L-tyrosine:2-oxoglutarate aminotransferase (probably invD) and atromentin synthetase invA5 catalyze consecutive steps to turn over L-tyrosine into atromentin, which represents the generic precursor molecule for the entire terphenylquinone and pulvinic acid family of pigments, which are widely distributed secondary metabolites in homobasidiomycetes. The first step catalyzed by the aminotransferase converts L-tyrosine in to 4-hydroxyphenylpyruvate (4-HPP). Adenylation of two 4-HPP monomers by the invA5 adenylation (A) domain, covalent tethering of the monomers as a thioester and oxoester onto the invA5 thiolation (T) and thioesterase (TE) domains, respectively, and symmetric C-C-bond formation between two monomers catalyzed by the invA5 TE domain leads to atromentin. The polypeptide is Atromentin synthetase invA5 (invA5) (Paxillus involutus (Naked brimcap)).